A 159-amino-acid polypeptide reads, in one-letter code: 6,7-dimethyl-8-ribityllumazine synthase (159 aa).

5-amino-6-(D-ribitylamino)uracil contacts are provided by residues Trp27, 62–64 (SWE), and 86–88 (VLI). Position 91 to 92 (91 to 92 (ST)) interacts with (2S)-2-hydroxy-3-oxobutyl phosphate. His94 serves as the catalytic Proton donor. Leu119 serves as a coordination point for 5-amino-6-(D-ribitylamino)uracil. Residue Arg133 coordinates (2S)-2-hydroxy-3-oxobutyl phosphate.

As to quaternary structure, homopentamer.

The enzyme catalyses (2S)-2-hydroxy-3-oxobutyl phosphate + 5-amino-6-(D-ribitylamino)uracil = 6,7-dimethyl-8-(1-D-ribityl)lumazine + phosphate + 2 H2O + H(+). The protein operates within cofactor biosynthesis; riboflavin biosynthesis; riboflavin from 2-hydroxy-3-oxobutyl phosphate and 5-amino-6-(D-ribitylamino)uracil: step 1/2. Its activity is regulated as follows. Competitively inhibited by riboflavin (Ki of 17 uM). Functionally, catalyzes the formation of 6,7-dimethyl-8-ribityllumazine by condensation of 5-amino-6-(D-ribitylamino)uracil with 3,4-dihydroxy-2-butanone 4-phosphate. This is the penultimate step in the biosynthesis of riboflavin. Also binds riboflavin with an unexpected high affinity. This is 6,7-dimethyl-8-ribityllumazine synthase (rib4) from Schizosaccharomyces pombe (strain 972 / ATCC 24843) (Fission yeast).